The following is a 460-amino-acid chain: MRAWEDFLLLQEKEIGTSTVDKWLRSLKVLCFDACNLYLEAKDSFQVTWFEEHIRHKVKTSLVNNNGKLIRVHITSLDKTAPFYKEKQIQQEKTAYFTMQYGNVNPEMTFGNFLVTPENDLPFRILQEFTKPAEDTAGFPFNPIYLFGPEGSGKTHLMQAAVNALREFGGKILYVASDLFTEHLVSAIRSGEMQRFRSFYRNVDALFIEDIEVFSGKGATQEEFFHTFNSLQTEGKLIVISSAYAPADLKAMEERLISRFEWGVAVPIHPLTKEGLRSFLMHQAEQLSVRIEDTALDFLIHALSSNVKTLIDALKLLSKRVAYKKLAQQLLYEDDIQTLLHDVLEVAESVRLTPSGIVRAVAKYYGVSPESILGRSQSREYVLPRQVSMYLCRQKLSLSYVRIGDVFSRDHSTVISSIRAISQKVEEGGDDISIATQELMKSLTSAYKSLEFFPEEEISC.

Residues 1-68 form a domain I, interacts with DnaA modulators region; it reads MRAWEDFLLL…KTSLVNNNGK (68 aa). The segment at 68 to 102 is domain II; it reads KLIRVHITSLDKTAPFYKEKQIQQEKTAYFTMQYG. The segment at 103–321 is domain III, AAA+ region; sequence NVNPEMTFGN…DALKLLSKRV (219 aa). ATP-binding residues include G151, G153, K154, and T155. Positions 322–460 are domain IV, binds dsDNA; the sequence is AYKKLAQQLL…EFFPEEEISC (139 aa).

Belongs to the DnaA family. In terms of assembly, oligomerizes as a right-handed, spiral filament on DNA at oriC.

The protein localises to the cytoplasm. Functionally, plays an essential role in the initiation and regulation of chromosomal replication. ATP-DnaA binds to the origin of replication (oriC) to initiate formation of the DNA replication initiation complex once per cell cycle. Binds the DnaA box (a 9 base pair repeat at the origin) and separates the double-stranded (ds)DNA. Forms a right-handed helical filament on oriC DNA; dsDNA binds to the exterior of the filament while single-stranded (ss)DNA is stabiized in the filament's interior. The ATP-DnaA-oriC complex binds and stabilizes one strand of the AT-rich DNA unwinding element (DUE), permitting loading of DNA polymerase. After initiation quickly degrades to an ADP-DnaA complex that is not apt for DNA replication. Binds acidic phospholipids. The chain is Chromosomal replication initiator protein DnaA 2 from Chlamydia caviae (strain ATCC VR-813 / DSM 19441 / 03DC25 / GPIC) (Chlamydophila caviae).